Consider the following 266-residue polypeptide: Apolipoprotein A-I (266 aa).

The signal sequence occupies residues 1 to 18; sequence MKAVVLTLAVLFLTGSQA. A run of 2 repeats spans residues 67 to 88 and 89 to 110. Residues 67–266 are 10 X approximate tandem repeats; sequence LKLLDNWDSL…DEATKKLNAQ (200 aa). Residue methionine 109 is modified to Methionine sulfoxide. The stretch at 111–121 is one 3; half-length repeat; the sequence is KDLEEVKKKVQ. 5 tandem repeats follow at residues 122–143, 144–165, 166–187, 188–209, and 210–231. A 9; half-length repeat occupies 232 to 242; the sequence is PALEDLRQGLM. Residues 243–266 form repeat 10; it reads PVLESFRASLLAAVDEATKKLNAQ.

The protein belongs to the apolipoprotein A1/A4/E family. Homodimer. Interacts with APOA1BP and CLU. Component of a sperm activating protein complex (SPAP), consisting of APOA1, an immunoglobulin heavy chain, an immunoglobulin light chain and albumin. Interacts with NDRG1. Interacts with SCGB3A2. Interacts with NAXE and YJEFN3. Glycosylated. In terms of processing, palmitoylated. Post-translationally, phosphorylation sites are present in the extracellular medium.

It localises to the secreted. Functionally, participates in the reverse transport of cholesterol from tissues to the liver for excretion by promoting cholesterol efflux from tissues and by acting as a cofactor for the lecithin cholesterol acyltransferase (LCAT). As part of the SPAP complex, activates spermatozoa motility. The chain is Apolipoprotein A-I (APOA1) from Phoca vitulina (Harbor seal).